We begin with the raw amino-acid sequence, 574 residues long: Phosphate permease PHO89 (574 aa).

At methionine 1–glutamine 5 the chain is on the extracellular side. A helical membrane pass occupies residues phenylalanine 6–alanine 26. Over asparagine 27–lysine 43 the chain is Cytoplasmic. A helical membrane pass occupies residues tyrosine 44 to alanine 64. Over arginine 65 to proline 84 the chain is Extracellular. Residues alanine 85–alanine 105 traverse the membrane as a helical segment. The Cytoplasmic segment spans residues threonine 106–serine 117. A helical transmembrane segment spans residues isoleucine 118–glycine 138. The Extracellular segment spans residues tryptophan 139–isoleucine 145. A helical transmembrane segment spans residues isoleucine 146–isoleucine 166. Residues serine 167 to alanine 184 lie on the Cytoplasmic side of the membrane. Residues leucine 185–tryptophan 205 traverse the membrane as a helical segment. Over lysine 206–alanine 222 the chain is Extracellular. The helical transmembrane segment at valine 223 to phenylalanine 243 threads the bilayer. At tyrosine 244–tryptophan 354 the chain is on the cytoplasmic side. Residues glutamate 301 to glutamate 332 form a disordered region. Residues valine 315–glutamate 332 are compositionally biased toward basic and acidic residues. The chain crosses the membrane as a helical span at residues proline 355 to valine 375. Residues asparagine 376 to arginine 398 are Extracellular-facing. The chain crosses the membrane as a helical span at residues valine 399–glycine 419. The Cytoplasmic portion of the chain corresponds to alanine 420–glutamate 447. A helical membrane pass occupies residues valine 448–glycine 468. The Extracellular portion of the chain corresponds to tyrosine 469–glutamine 503. Residues leucine 504–cysteine 524 traverse the membrane as a helical segment. The Cytoplasmic segment spans residues asparagine 525 to serine 541. A helical membrane pass occupies residues glycine 542–leucine 562. Over asparagine 563–threonine 574 the chain is Extracellular.

This sequence belongs to the inorganic phosphate transporter (PiT) (TC 2.A.20) family. Forms homodimers and higher order homooligomers.

The protein resides in the cell membrane. It carries out the reaction 2 Na(+)(out) + phosphate(out) = 2 Na(+)(in) + phosphate(in). Weakly stimulated by Li(+) and K(+). Inhibited by monensin. Inhibited by phosphonoacetic acid. Inhibited by methylphosphonate. Inhibited by dimethylphosphonate. Functionally, sodium-phosphate symporter. Active in early growth phase. The polypeptide is Phosphate permease PHO89 (PHO89) (Saccharomyces cerevisiae (strain ATCC 204508 / S288c) (Baker's yeast)).